A 159-amino-acid polypeptide reads, in one-letter code: Heterocyst differentiation protein HetP (159 aa).

A required to complement a hetP deletion region spans residues 1-50 (MNQNTTGITNYNKAINPQQFDKVVEAILAGKYSWACVLMLRFAGYNPMHY).

This sequence belongs to the HetP family. In bacterial two-hybrid assays interacts weakly with Asl1930, Alr2902 and Alr3234.

Its function is as follows. Promotes heterocyst differentiation and commitment when nitrogen is limiting. Interplay between the 4 HetP paralogs controls the timing of commitment to heterocyst formation and its duration. Epistatic analysis show that the 3 paralogs act upstream of hetP to delay commitment (asl1930, alr3234) or inhibit development (alr2902). Asl1930 and Alr3234 must also attenuate the activity of Alr2902. Required for heterocyst formation. Functions directly downstream of master regulator HetR to promote heterocyst differentiation, functioning downstream of patterning (cell choice). Partially functionally redundant with homologs alr2902 and asl1930 but not alr3234. Overexpression leads to more than wild-type levels of heterocysts. Overexpression in the absence of hetR partially bypasses hetR deletion, allowing differentiation of heterocysts, although they only fix nitrogen in the absence of oxygen (a Fox- Fix+ phenotype), suggesting they are not fully. The polypeptide is Heterocyst differentiation protein HetP (Nostoc sp. (strain PCC 7120 / SAG 25.82 / UTEX 2576)).